A 432-amino-acid chain; its full sequence is Neuronal pentraxin-1 (432 aa).

The N-terminal stretch at 1 to 22 (MLAGRAARTCALLALCLLGSRA) is a signal peptide. Positions 90-128 (ESQSTLDAGPGEARSGGGRKQPGSGKNTMGDLSRTPASE) are disordered. Asparagine 154 and asparagine 193 each carry an N-linked (GlcNAc...) asparagine glycan. One can recognise a Pentraxin (PTX) domain in the interval 226-428 (DKFQLTFPLR…GATKWTFEAC (203 aa)). Cysteines 256 and 316 form a disulfide. Asparagine 280, glutamate 358, glutamine 359, aspartate 360, and glutamine 370 together coordinate Ca(2+).

As to quaternary structure, homooligomer or heterooligomer (probably pentamer) with neuronal pentraxin receptor (NPTXR). The cofactor is Ca(2+). Glycosylated. As to expression, cerebellum, hippocampus and cerebral cortex.

The protein localises to the secreted. It localises to the cytoplasmic vesicle. It is found in the secretory vesicle. The protein resides in the endoplasmic reticulum. Its function is as follows. May be involved in mediating uptake of synaptic material during synapse remodeling or in mediating the synaptic clustering of AMPA glutamate receptors at a subset of excitatory synapses. The sequence is that of Neuronal pentraxin-1 (Nptx1) from Rattus norvegicus (Rat).